The chain runs to 134 residues: Homeobox protein ceh-5 (134 aa).

The segment at residues 35–94 (PKRPRTVFTDEQLEKLEESFNTSGYLSGSTRAKLAESLGLSDNQVKVWFQNRRTKQKKID) is a DNA-binding region (homeobox).

Its subcellular location is the nucleus. This Caenorhabditis elegans protein is Homeobox protein ceh-5 (ceh-5).